A 327-amino-acid polypeptide reads, in one-letter code: Lipoyl synthase (327 aa).

Cysteine 74, cysteine 79, cysteine 85, cysteine 100, cysteine 104, cysteine 107, and serine 314 together coordinate [4Fe-4S] cluster. The 218-residue stretch at 86 to 303 (FSGGTATFMI…AEEGERMGFK (218 aa)) folds into the Radical SAM core domain.

This sequence belongs to the radical SAM superfamily. Lipoyl synthase family. It depends on [4Fe-4S] cluster as a cofactor.

The protein resides in the cytoplasm. It catalyses the reaction [[Fe-S] cluster scaffold protein carrying a second [4Fe-4S](2+) cluster] + N(6)-octanoyl-L-lysyl-[protein] + 2 oxidized [2Fe-2S]-[ferredoxin] + 2 S-adenosyl-L-methionine + 4 H(+) = [[Fe-S] cluster scaffold protein] + N(6)-[(R)-dihydrolipoyl]-L-lysyl-[protein] + 4 Fe(3+) + 2 hydrogen sulfide + 2 5'-deoxyadenosine + 2 L-methionine + 2 reduced [2Fe-2S]-[ferredoxin]. It functions in the pathway protein modification; protein lipoylation via endogenous pathway; protein N(6)-(lipoyl)lysine from octanoyl-[acyl-carrier-protein]: step 2/2. Functionally, catalyzes the radical-mediated insertion of two sulfur atoms into the C-6 and C-8 positions of the octanoyl moiety bound to the lipoyl domains of lipoate-dependent enzymes, thereby converting the octanoylated domains into lipoylated derivatives. In Pseudomonas paraeruginosa (strain DSM 24068 / PA7) (Pseudomonas aeruginosa (strain PA7)), this protein is Lipoyl synthase.